A 492-amino-acid chain; its full sequence is Protein adenylyltransferase Fic (492 aa).

A compositionally biased stretch (low complexity) spans 1–18 (MGTEAEQPSPPAQQQDQE). Residues 1 to 26 (MGTEAEQPSPPAQQQDQENPPLCKAQ) form a disordered region. A helical transmembrane segment spans residues 33 to 55 (LYRFVLIFVAGSLAAWTFHALSS). TPR repeat units follow at residues 118 to 151 (ALGA…APRH) and 152 to 186 (PEVL…SPSN). Residues 243–248 (SVGIEG) carry the Inhibitory (S/T)XXXE(G/N) motif motif. ATP is bound by residues Glu247 and 328–331 (VGGH). Positions 297-432 (ITIKDILELH…IRPFVRFIAD (136 aa)) constitute a Fido domain. The active site involves His375. ATP contacts are provided by residues 379-386 (DGNGRTSR), 411-412 (YY), and Asn419.

This sequence belongs to the fic family. Homodimer; homodimerization may regulate adenylyltransferase and phosphodiesterase activities.

The protein localises to the membrane. The catalysed reaction is L-tyrosyl-[protein] + ATP = O-(5'-adenylyl)-L-tyrosyl-[protein] + diphosphate. The enzyme catalyses L-threonyl-[protein] + ATP = 3-O-(5'-adenylyl)-L-threonyl-[protein] + diphosphate. It carries out the reaction 3-O-(5'-adenylyl)-L-threonyl-[protein] + H2O = L-threonyl-[protein] + AMP + H(+). With respect to regulation, the side chain of Glu-247 determines which of the two opposing activities (AMPylase or de-AMPylase) will take place. In response to endoplasmic reticulum stress, mediates de-AMPylase activity. Adenylyltransferase activity is inhibited by the inhibitory helix present at the N-terminus: Glu-247 binds ATP and competes with ATP-binding at Arg-386, thereby preventing adenylyltransferase activity. In unstressed cells, disengagement of Glu-247 promotes adenylyltransferase activity. Activation dissociates ATP-binding from Glu-247, allowing ordered binding of the entire ATP moiety with the alpha-phosphate in an orientation that is productive for accepting an incoming target hydroxyl side chain. Protein that can both mediate the addition of adenosine 5'-monophosphate (AMP) to specific residues of target proteins (AMPylation), and the removal of the same modification from target proteins (de-AMPylation), depending on the context. The side chain of Glu-247 determines which of the two opposing activities (AMPylase or de-AMPylase) will take place. Acts as a key regulator of the unfolded protein response (UPR) by mediating AMPylation or de-AMPylation of Hsc70-3/BiP. In unstressed cells, acts as an adenylyltransferase by mediating AMPylation of Hsc70-3/BiP at 'Thr-518', thereby inactivating it. In response to endoplasmic reticulum stress, acts as a phosphodiesterase by mediating removal of ATP (de-AMPylation) from Hsc70-3/BiP at 'Thr-518', leading to restore HSPA5/BiP activity. This is Protein adenylyltransferase Fic from Drosophila melanogaster (Fruit fly).